The following is a 255-amino-acid chain: Ras-like protein family member 12 (255 aa).

GTP-binding positions include 30 to 37 (GAMGSGKS), 77 to 81 (DTADQ), and 137 to 140 (NKVD).

Belongs to the small GTPase superfamily. Ras family.

The enzyme catalyses GTP + H2O = GDP + phosphate + H(+). This chain is Ras-like protein family member 12 (RASL12), found in Danio rerio (Zebrafish).